The chain runs to 266 residues: Tryptophan synthase alpha chain (266 aa).

Active-site proton acceptor residues include glutamate 51 and aspartate 62.

This sequence belongs to the TrpA family. As to quaternary structure, tetramer of two alpha and two beta chains.

The enzyme catalyses (1S,2R)-1-C-(indol-3-yl)glycerol 3-phosphate + L-serine = D-glyceraldehyde 3-phosphate + L-tryptophan + H2O. The protein operates within amino-acid biosynthesis; L-tryptophan biosynthesis; L-tryptophan from chorismate: step 5/5. Its function is as follows. The alpha subunit is responsible for the aldol cleavage of indoleglycerol phosphate to indole and glyceraldehyde 3-phosphate. This Thermosynechococcus vestitus (strain NIES-2133 / IAM M-273 / BP-1) protein is Tryptophan synthase alpha chain.